The primary structure comprises 813 residues: Leucine--tRNA ligase (813 aa).

Residues 40-51 (SYPSGSKLHAGH) carry the 'HIGH' region motif. Residues 572-576 (KMSKS) carry the 'KMSKS' region motif. Lys575 contributes to the ATP binding site.

This sequence belongs to the class-I aminoacyl-tRNA synthetase family.

It localises to the cytoplasm. The catalysed reaction is tRNA(Leu) + L-leucine + ATP = L-leucyl-tRNA(Leu) + AMP + diphosphate. This Clostridium botulinum (strain Langeland / NCTC 10281 / Type F) protein is Leucine--tRNA ligase.